The primary structure comprises 476 residues: MTILAPVTKSESSTDPRDPLARLENLFDPGTTVPLHARDKSGVLAASGNIDGVRTIAYCSDATVMGGAMGVDGCKHLVKAIDTAIEEESPIVGLWHSGGARLAEGVEALHAVGLVFEAMVRASGLIPQISVVLGFAAGGAAYGPALTDVVIMAPEGRVFVTGPDVVRSVTGEQVDMVSLGGPDTHTKKSGVAHIAAHDEADALHRARRLVSMMCEQGEFDQRAAELGDSDLRAMMPASAKRAYDVRPIVHEMLDNVEGESSFEELQGNYARSIVTGFGRMAGRTVGVIANNPLRLGCLNSESAEKAARFVRLCNAFGVPLVVVVDVPGYLPGVSMEWEGVVRRGAKLLHAFAEATVPRVTVVTRKIYGGAYIAMNSRALGATAVFAWPNSEVAVMGAKAAVGILHKRALAAAPDDEREALHDRLAAEHEAIAGGVDRRCRNRRRRRGNRPGEDSQHRHAALASAPSVRARHKNIPL.

The CoA carboxyltransferase N-terminal domain occupies 1-225; sequence MTILAPVTKS…QGEFDQRAAE (225 aa). The tract at residues 1-476 is carboxyltransferase; it reads MTILAPVTKS…VRARHKNIPL (476 aa). A CoA carboxyltransferase C-terminal domain is found at 226–476; the sequence is LGDSDLRAMM…VRARHKNIPL (251 aa). A compositionally biased stretch (basic residues) spans 439-448; sequence CRNRRRRRGN. Residues 439–476 are disordered; that stretch reads CRNRRRRRGNRPGEDSQHRHAALASAPSVRARHKNIPL.

It belongs to the AccD/PCCB family. As to quaternary structure, probably a dodecamer composed of six biotin-containing alpha subunits and six beta subunits.

It carries out the reaction propanoyl-CoA + hydrogencarbonate + ATP = (S)-methylmalonyl-CoA + ADP + phosphate + H(+). The protein operates within metabolic intermediate metabolism; propanoyl-CoA degradation; succinyl-CoA from propanoyl-CoA: step 1/3. This Rhodococcus erythropolis (Arthrobacter picolinophilus) protein is Propionyl-CoA carboxylase beta chain (pccB).